Consider the following 485-residue polypeptide: D-alanine--D-alanyl carrier protein ligase (485 aa).

144–145 (TS) provides a ligand contact to ATP. Position 189 (D189) interacts with D-alanine. 284–289 (NTYGPT) provides a ligand contact to ATP. V293 is a D-alanine binding site. Residues D365 and K473 each contribute to the ATP site. Position 473 (K473) interacts with D-alanine.

It belongs to the ATP-dependent AMP-binding enzyme family. DltA subfamily.

Its subcellular location is the cytoplasm. The catalysed reaction is holo-[D-alanyl-carrier protein] + D-alanine + ATP = D-alanyl-[D-alanyl-carrier protein] + AMP + diphosphate. Its pathway is cell wall biogenesis; lipoteichoic acid biosynthesis. Functionally, catalyzes the first step in the D-alanylation of lipoteichoic acid (LTA), the activation of D-alanine and its transfer onto the D-alanyl carrier protein (Dcp) DltC. In an ATP-dependent two-step reaction, forms a high energy D-alanyl-AMP intermediate, followed by transfer of the D-alanyl residue as a thiol ester to the phosphopantheinyl prosthetic group of the Dcp. D-alanylation of LTA plays an important role in modulating the properties of the cell wall in Gram-positive bacteria, influencing the net charge of the cell wall. The polypeptide is D-alanine--D-alanyl carrier protein ligase (Staphylococcus aureus (strain bovine RF122 / ET3-1)).